Here is a 227-residue protein sequence, read N- to C-terminus: Cytidylate kinase (227 aa).

12–20 (GPSGVGKGT) is a binding site for ATP.

Belongs to the cytidylate kinase family. Type 1 subfamily.

The protein resides in the cytoplasm. It carries out the reaction CMP + ATP = CDP + ADP. The enzyme catalyses dCMP + ATP = dCDP + ADP. This is Cytidylate kinase from Shewanella denitrificans (strain OS217 / ATCC BAA-1090 / DSM 15013).